The following is a 220-amino-acid chain: Deoxyribose-phosphate aldolase (220 aa).

D89 (proton donor/acceptor) is an active-site residue. Residue K151 is the Schiff-base intermediate with acetaldehyde of the active site. The active-site Proton donor/acceptor is the K180.

Belongs to the DeoC/FbaB aldolase family. DeoC type 1 subfamily.

It is found in the cytoplasm. The enzyme catalyses 2-deoxy-D-ribose 5-phosphate = D-glyceraldehyde 3-phosphate + acetaldehyde. It participates in carbohydrate degradation; 2-deoxy-D-ribose 1-phosphate degradation; D-glyceraldehyde 3-phosphate and acetaldehyde from 2-deoxy-alpha-D-ribose 1-phosphate: step 2/2. Catalyzes a reversible aldol reaction between acetaldehyde and D-glyceraldehyde 3-phosphate to generate 2-deoxy-D-ribose 5-phosphate. In Thermus thermophilus (strain ATCC BAA-163 / DSM 7039 / HB27), this protein is Deoxyribose-phosphate aldolase.